Here is a 1521-residue protein sequence, read N- to C-terminus: Lysophospholipase NTE1 (1521 aa).

The Cytoplasmic segment spans residues 1-50 (MDVVNSTARAAVTSATAVTAVTGTGDRHPNPLSSAVAAASDVANAHGSSS). The chain crosses the membrane as a helical span at residues 51–71 (WLGLFARVVLWLLQFVSMVLY). Topologically, residues 72-96 (YAIKLATISVPTLLYTLFSTSLTVT) are lumenal. Residues 97-117 (MNATTLMLIVAAMIGAISWVV) form a helical membrane-spanning segment. Topologically, residues 118–1521 (RYRYLNMYSR…RTMAPRRASI (1404 aa)) are cytoplasmic. 3 disordered regions span residues 280-301 (HADE…PNYP), 315-372 (SVPN…SAHP), and 738-768 (HAMD…KVDD). 2 stretches are compositionally biased toward polar residues: residues 316 to 334 (VPNT…NNLP) and 738 to 753 (HAMD…QRSP). Residues 670 to 789 (PASP…GGLA) and 837 to 957 (RLTN…IASR) each bind a nucleoside 3',5'-cyclic phosphate. The PNPLA domain maps to 1217–1381 (LVLGGGGARG…VDNLTVSHMK (165 aa)). Residues 1221–1226 (GGGARG) carry the GXGXXG motif. The GXSXG signature appears at 1248-1252 (GTSIG). Ser1250 acts as the Nucleophile in catalysis. Asp1368 serves as the catalytic Proton acceptor. The DGA/G motif lies at 1368–1370 (DGG).

Belongs to the NTE family.

The protein resides in the endoplasmic reticulum membrane. It carries out the reaction a 1-acyl-sn-glycero-3-phosphocholine + H2O = sn-glycerol 3-phosphocholine + a fatty acid + H(+). Inhibited by organophosphorus esters. Functionally, intracellular phospholipase B that catalyzes the double deacylation of phosphatidylcholine (PC) to glycerophosphocholine (GroPCho). Plays an important role in membrane lipid homeostasis. Responsible for the rapid PC turnover in response to inositol, elevated temperatures, or when choline is present in the growth medium. The sequence is that of Lysophospholipase NTE1 (NTE1) from Chaetomium globosum (strain ATCC 6205 / CBS 148.51 / DSM 1962 / NBRC 6347 / NRRL 1970) (Soil fungus).